Here is a 176-residue protein sequence, read N- to C-terminus: ATP synthase subunit b 2 (176 aa).

Residues 29–49 (IFWLVITLVIIYMVLSKVALP) form a helical membrane-spanning segment.

The protein belongs to the ATPase B chain family. As to quaternary structure, F-type ATPases have 2 components, F(1) - the catalytic core - and F(0) - the membrane proton channel. F(1) has five subunits: alpha(3), beta(3), gamma(1), delta(1), epsilon(1). F(0) has three main subunits: a(1), b(2) and c(10-14). The alpha and beta chains form an alternating ring which encloses part of the gamma chain. F(1) is attached to F(0) by a central stalk formed by the gamma and epsilon chains, while a peripheral stalk is formed by the delta and b chains.

Its subcellular location is the cell inner membrane. Its function is as follows. F(1)F(0) ATP synthase produces ATP from ADP in the presence of a proton or sodium gradient. F-type ATPases consist of two structural domains, F(1) containing the extramembraneous catalytic core and F(0) containing the membrane proton channel, linked together by a central stalk and a peripheral stalk. During catalysis, ATP synthesis in the catalytic domain of F(1) is coupled via a rotary mechanism of the central stalk subunits to proton translocation. Functionally, component of the F(0) channel, it forms part of the peripheral stalk, linking F(1) to F(0). The b'-subunit is a diverged and duplicated form of b found in plants and photosynthetic bacteria. The protein is ATP synthase subunit b 2 (atpF2) of Roseobacter denitrificans (strain ATCC 33942 / OCh 114) (Erythrobacter sp. (strain OCh 114)).